The sequence spans 267 residues: tRNA pseudouridine synthase A (267 aa).

Asp55 (nucleophile) is an active-site residue. Position 111 (Tyr111) interacts with substrate.

This sequence belongs to the tRNA pseudouridine synthase TruA family.

It catalyses the reaction uridine(38/39/40) in tRNA = pseudouridine(38/39/40) in tRNA. Formation of pseudouridine at positions 38, 39 and 40 in the anticodon stem and loop of transfer RNAs. This Thermococcus onnurineus (strain NA1) protein is tRNA pseudouridine synthase A.